A 763-amino-acid polypeptide reads, in one-letter code: Protein translocase subunit SecA 2 (763 aa).

Residues glutamine 83, 101-105, and aspartate 490 each bind ATP; that span reads GEGKT.

The protein belongs to the SecA family. In terms of assembly, monomer and homodimer. Part of the essential Sec protein translocation apparatus which comprises SecA, SecYEG and auxiliary proteins SecDF. Other proteins may also be involved.

The protein resides in the cell membrane. Its subcellular location is the cytoplasm. It catalyses the reaction ATP + H2O + cellular proteinSide 1 = ADP + phosphate + cellular proteinSide 2.. Its function is as follows. Part of the Sec protein translocase complex. Interacts with the SecYEG preprotein conducting channel. Has a central role in coupling the hydrolysis of ATP to the transfer of proteins into and across the cell membrane, serving as an ATP-driven molecular motor driving the stepwise translocation of polypeptide chains across the membrane. In Corynebacterium efficiens (strain DSM 44549 / YS-314 / AJ 12310 / JCM 11189 / NBRC 100395), this protein is Protein translocase subunit SecA 2.